A 330-amino-acid polypeptide reads, in one-letter code: Free fatty acid receptor 2 (330 aa).

Over 1-8 (MTPDWHSS) the chain is Extracellular. Residues 9–29 (LILTAYILIFLTGLPANLLAL) traverse the membrane as a helical segment. Residues 30-43 (RAFMGRVRQPQPAP) lie on the Cytoplasmic side of the membrane. The helical transmembrane segment at 44–64 (VHILLLNLTLADLLLLLLLPF) threads the bilayer. The Extracellular portion of the chain corresponds to 65–79 (RIVEAASNFRWYLPK). A helical transmembrane segment spans residues 80–100 (IVCALTGFGFYSSIYCSTWLL). Over 101-126 (AGISMERYLGVAFPVQYKLSRRPLYG) the chain is Cytoplasmic. Residues 127–147 (VIAALVAWIMSFGHCTIVIIV) traverse the membrane as a helical segment. Topologically, residues 148–184 (QYLNSTEQVGTENQITCYENFTQEQLDVVLPVRLELC) are extracellular. N-linked (GlcNAc...) asparagine glycosylation is found at N151 and N167. The chain crosses the membrane as a helical span at residues 185-205 (LVLFFVPMAVTIFCYWRFVWI). Residues 206-219 (MLTQPHVGAQRRRR) lie on the Cytoplasmic side of the membrane. The helical transmembrane segment at 220 to 240 (AVGLAVVTLLNFLVCFGPYNM) threads the bilayer. Residues 241 to 255 (SHLVGFYLRQSPSWR) lie on the Extracellular side of the membrane. Residues 256-276 (VEAVVFSSLNASLDPLLFYFS) traverse the membrane as a helical segment. Over 277–330 (SSVVRRAFGKGLLLIRNPASSMLGRGAKETVEGTKMDRGGSQAEGVQSSEFVTE) the chain is Cytoplasmic. The disordered stretch occupies residues 306 to 330 (TVEGTKMDRGGSQAEGVQSSEFVTE). The span at 320–330 (EGVQSSEFVTE) shows a compositional bias: polar residues.

Belongs to the G-protein coupled receptor 1 family. Interacts with FCN1 (via Fibrinogen C-terminal domain). Highly expressed in hematopoietic tissues, such as spleen and bone marrow, with highest levels in a subset of immune cells, including monocytes or neutrophils. Expressed in adipose tissues with high expression in differentiating adipocytes. Expressed by intestinal endocrine cells.

It is found in the cell membrane. Its function is as follows. G protein-coupled receptor that is activated by a major product of dietary fiber digestion, the short chain fatty acids (SCFAs), and that plays a role in the regulation of whole-body energy homeostasis and in intestinal immunity. In omnivorous mammals, the short chain fatty acids acetate, propionate and butyrate are produced primarily by the gut microbiome that metabolizes dietary fibers. SCFAs serve as a source of energy but also act as signaling molecules. That G protein-coupled receptor is probably coupled to the pertussis toxin-sensitive, G(i/o)-alpha family of G proteins but also to the Gq family. Its activation results in the formation of inositol 1,4,5-trisphosphate, the mobilization of intracellular calcium, the phosphorylation of the MAPK3/ERK1 and MAPK1/ERK2 kinases and the inhibition of intracellular cAMP accumulation. May play a role in glucose homeostasis by regulating the secretion of GLP-1, in response to short-chain fatty acids accumulating in the intestine. May also regulate the production of LEP/Leptin, a hormone acting on the central nervous system to inhibit food intake. Finally, may also regulate whole-body energy homeostasis through adipogenesis regulating both differentiation and lipid storage of adipocytes. In parallel to its role in energy homeostasis, may also mediate the activation of the inflammatory and immune responses by SCFA in the intestine, regulating the rapid production of chemokines and cytokines. May also play a role in the resolution of the inflammatory response and control chemotaxis in neutrophils. In addition to SCFAs, may also be activated by the extracellular lectin FCN1 in a process leading to activation of monocytes and inducing the secretion of interleukin-8/IL-8 in response to the presence of microbes. This is Free fatty acid receptor 2 (Ffar2) from Mus musculus (Mouse).